A 446-amino-acid polypeptide reads, in one-letter code: NAD kinase (446 aa).

Phosphoserine occurs at positions 46, 48, 50, 55, and 64.

The protein belongs to the NAD kinase family. A divalent metal cation serves as cofactor. In terms of tissue distribution, widely expressed but not detected in skeletal muscle.

The catalysed reaction is NAD(+) + ATP = ADP + NADP(+) + H(+). In Homo sapiens (Human), this protein is NAD kinase (NADK).